A 161-amino-acid chain; its full sequence is uncharacterized protein (161 aa).

Low complexity predominate over residues 1–16; that stretch reads MPRAGRAPAEGGPAPG. Disordered stretches follow at residues 1-23, 50-91, and 140-161; these read MPRA…SRCL, GRPV…TQSA, and RGPA…WRIS.

This is an uncharacterized protein from Homo sapiens (Human).